The primary structure comprises 146 residues: ATP synthase epsilon chain (146 aa).

A disordered region spans residues Gln-103–Glu-124.

Belongs to the ATPase epsilon chain family. As to quaternary structure, F-type ATPases have 2 components, CF(1) - the catalytic core - and CF(0) - the membrane proton channel. CF(1) has five subunits: alpha(3), beta(3), gamma(1), delta(1), epsilon(1). CF(0) has three main subunits: a, b and c.

The protein localises to the cell membrane. Its function is as follows. Produces ATP from ADP in the presence of a proton gradient across the membrane. The chain is ATP synthase epsilon chain from Rubrobacter xylanophilus (strain DSM 9941 / JCM 11954 / NBRC 16129 / PRD-1).